The chain runs to 339 residues: Zinc metalloprotease MJ0392 (339 aa).

The next 2 helical transmembrane spans lie at 10–30 and 33–53; these read IMGI…VIIG and IMNN…SVVL. Position 54 (H54) interacts with Zn(2+). Residue E55 is part of the active site. H58 contributes to the Zn(2+) binding site. 2 consecutive transmembrane segments (helical) span residues 96 to 116 and 125 to 145; these read IAGP…SQFF and LLYT…IPAF. Position 148 (D148) interacts with Zn(2+). 2 helical membrane-spanning segments follow: residues 180 to 200 and 251 to 271; these read IMLL…SLFV and YFGY…IGNI. CBS domains lie at 226-281 and 281-335; these read MTPN…VRDY and YMEK…ELKE.

The protein belongs to the peptidase M50B family. As to quaternary structure, monomer. Zn(2+) serves as cofactor.

It localises to the cell membrane. Its activity is regulated as follows. Inhibited by 1,10-phenanthroline. Functionally, a site-2 regulated intramembrane protease (S2P) that cleaves type-2 transmembrane proteins within their membrane-spanning domains; its endogenous substrate is unknown. Regulated intramembrane proteolysis (RIP) occurs when an extracytoplasmic signal triggers a concerted proteolytic cascade to transmit information and elicit cellular responses. A membrane-spanning regulatory substrate protein is first cut extracytoplasmically (site-1 protease, S1P), then within the membrane itself (site-2 protease, S2P, this enzyme), while cytoplasmic proteases finish degrading the regulatory protein, liberating the effector protein. Possible signals, S1P and substrates are unknown in this organism. The sequence is that of Zinc metalloprotease MJ0392 from Methanocaldococcus jannaschii (strain ATCC 43067 / DSM 2661 / JAL-1 / JCM 10045 / NBRC 100440) (Methanococcus jannaschii).